Consider the following 475-residue polypeptide: Ribosomal RNA small subunit methyltransferase F (475 aa).

Residues 125–131, glutamate 149, aspartate 176, and aspartate 194 each bind S-adenosyl-L-methionine; that span reads AAAPGSK. Cysteine 247 acts as the Nucleophile in catalysis.

It belongs to the class I-like SAM-binding methyltransferase superfamily. RsmB/NOP family.

The protein localises to the cytoplasm. It catalyses the reaction cytidine(1407) in 16S rRNA + S-adenosyl-L-methionine = 5-methylcytidine(1407) in 16S rRNA + S-adenosyl-L-homocysteine + H(+). In terms of biological role, specifically methylates the cytosine at position 1407 (m5C1407) of 16S rRNA. This Aeromonas hydrophila subsp. hydrophila (strain ATCC 7966 / DSM 30187 / BCRC 13018 / CCUG 14551 / JCM 1027 / KCTC 2358 / NCIMB 9240 / NCTC 8049) protein is Ribosomal RNA small subunit methyltransferase F.